We begin with the raw amino-acid sequence, 406 residues long: Transposase for insertion sequence element IS1001 (406 aa).

The protein belongs to the transposase 12 family.

In terms of biological role, involved in the transposition of the insertion sequence. The chain is Transposase for insertion sequence element IS1001 (tnpA) from Bordetella parapertussis.